A 738-amino-acid polypeptide reads, in one-letter code: NAD(P)H-quinone oxidoreductase subunit 5, chloroplastic (738 aa).

The next 17 membrane-spanning stretches (helical) occupy residues 9-29 (WVIP…LFLI), 39-59 (IWAF…LHLS), 89-109 (VDPL…LVLI), 125-145 (FVYI…SNLI), 147-167 (IYFF…FWFT), 185-205 (GDFG…SLEF), 219-239 (NGIN…GAVA), 258-278 (TPIS…FLLA), 280-300 (LLPL…VGTI), 327-347 (LGYM…FHLI), 354-374 (ALLF…VGYS), 396-416 (TTFL…CFWS), 425-445 (WLYS…TAFY), 542-562 (LFPL…GIPF), 610-630 (SLAI…YSFF), 691-711 (GVID…GEEI), and 717-737 (GRIS…LFFI).

It belongs to the complex I subunit 5 family. As to quaternary structure, NDH is composed of at least 16 different subunits, 5 of which are encoded in the nucleus.

Its subcellular location is the plastid. The protein resides in the chloroplast thylakoid membrane. The catalysed reaction is a plastoquinone + NADH + (n+1) H(+)(in) = a plastoquinol + NAD(+) + n H(+)(out). It carries out the reaction a plastoquinone + NADPH + (n+1) H(+)(in) = a plastoquinol + NADP(+) + n H(+)(out). NDH shuttles electrons from NAD(P)H:plastoquinone, via FMN and iron-sulfur (Fe-S) centers, to quinones in the photosynthetic chain and possibly in a chloroplast respiratory chain. The immediate electron acceptor for the enzyme in this species is believed to be plastoquinone. Couples the redox reaction to proton translocation, and thus conserves the redox energy in a proton gradient. The protein is NAD(P)H-quinone oxidoreductase subunit 5, chloroplastic (ndhF) of Sorghum bicolor (Sorghum).